Consider the following 89-residue polypeptide: Small ribosomal subunit protein bS20 (89 aa).

The disordered stretch occupies residues 1–28 (MTLANIKSAKKRAVQSEKSRQHNASQRS).

This sequence belongs to the bacterial ribosomal protein bS20 family.

Its function is as follows. Binds directly to 16S ribosomal RNA. This is Small ribosomal subunit protein bS20 from Mannheimia succiniciproducens (strain KCTC 0769BP / MBEL55E).